A 225-amino-acid chain; its full sequence is UPF0758 protein MADE_1000235 (225 aa).

One can recognise an MPN domain in the interval 102–224 (VFNNVDDTKR…TISFAQRGLL (123 aa)). 3 residues coordinate Zn(2+): H173, H175, and D186. Residues 173 to 186 (HNHPSGVAEPSHAD) carry the JAMM motif motif.

Belongs to the UPF0758 family.

The sequence is that of UPF0758 protein MADE_1000235 from Alteromonas mediterranea (strain DSM 17117 / CIP 110805 / LMG 28347 / Deep ecotype).